A 215-amino-acid chain; its full sequence is MAKETRFYPYTSNGGATLGVSGPDFAILAGDTRSTAGYNINTRYEPKVFTIQDARDRSIVISVIGFAADGRALKERLDAIVAMYKYQHGKNIGLRACAQRVSTMLYEKRFFPYQLQTMVAGIDADGQGAIYYYDPAGCIEKRSHCAAGEASSLMLPFLDSQAPRLQPLSLQTAQQLVRDAYTGATERHIEVGDHLQMLVVTREGVSEQLVDLKKD.

Belongs to the peptidase T1B family.

The protein localises to the cytoplasm. It is found in the nucleus. It catalyses the reaction Cleavage of peptide bonds with very broad specificity.. In terms of biological role, proteasome subunit beta type-6; part of the inp gene cluster that mediates the biosynthesis of fellutamide B, a mycotoxin that acts as a proteasome inhibitor. In the first step of fellutabmide B biosynthesis inpC activates 3-hydroxydodecanoic acid to generate 3-hydroxydodecanoyl-AMP that is then loaded onto the T0 domain of inpB. The 3-hydroxydodecanoyl-S-phosphopantetheinyl-T0 is sequentially extended with L-Asn and L-Gln by the two CAT modules of inpB. The linear lipodipeptide from inpB is then transferred onto inpA for the addition of the third amino acid, L-Leu. Reductive releasing of the lipotripeptide by the TE domain of inpA produces (2S)-fellutamide B. InpF might be involved in the release and transfer of the lipodipeptide from inpB to inpA. The inp cluster-encoded proteasome subunit inpE confers resistance to internally produced fellutamides. The MFS efflux transporter inpD may contribute to fellutamide resistance as well. This chain is Proteasome subunit beta inpE (inpE), found in Emericella nidulans (strain FGSC A4 / ATCC 38163 / CBS 112.46 / NRRL 194 / M139) (Aspergillus nidulans).